A 268-amino-acid chain; its full sequence is MERYENLFAQLNDRREGAFVPFVTLGDPGIEQSLKIIDTLIDAGANALELGVPFSDPLADGPTIQNANLRAFAAGVTPAQCFEMLALIREKHPTIPIGLLMYANLVFNNGIDAFYARCEQVGVDSVLVADVPVEESAPFRQAALRHNIAPIFICPPNADDDLLRQVASYGRGYTYLLSRSGVTGAENRGALPLHHLIEKLKEYHAAPALQGFGISSPEQVSAAVRAGAAGAISGSAIVKIIEKNLASPEQMLAELRSFVSAMKAASRA.

Catalysis depends on proton acceptor residues Glu-49 and Asp-60.

This sequence belongs to the TrpA family. In terms of assembly, tetramer of two alpha and two beta chains.

The enzyme catalyses (1S,2R)-1-C-(indol-3-yl)glycerol 3-phosphate + L-serine = D-glyceraldehyde 3-phosphate + L-tryptophan + H2O. It functions in the pathway amino-acid biosynthesis; L-tryptophan biosynthesis; L-tryptophan from chorismate: step 5/5. Functionally, the alpha subunit is responsible for the aldol cleavage of indoleglycerol phosphate to indole and glyceraldehyde 3-phosphate. This chain is Tryptophan synthase alpha chain, found in Salmonella paratyphi A (strain ATCC 9150 / SARB42).